Here is a 114-residue protein sequence, read N- to C-terminus: Small ribosomal subunit protein eS25 (114 aa).

The segment at 1–33 (MAPKKDKAPPPSSKPAKSGGKQKKKKWSKGKQK) is disordered. Over residues 20–30 (GKQKKKKWSKG) the composition is skewed to basic residues.

This sequence belongs to the eukaryotic ribosomal protein eS25 family.

The chain is Small ribosomal subunit protein eS25 (RPS25) from Amaranthus cruentus (Purple amaranth).